A 101-amino-acid polypeptide reads, in one-letter code: Urease subunit beta (101 aa).

This sequence belongs to the urease beta subunit family. As to quaternary structure, heterotrimer of UreA (gamma), UreB (beta) and UreC (alpha) subunits. Three heterotrimers associate to form the active enzyme.

Its subcellular location is the cytoplasm. The catalysed reaction is urea + 2 H2O + H(+) = hydrogencarbonate + 2 NH4(+). It participates in nitrogen metabolism; urea degradation; CO(2) and NH(3) from urea (urease route): step 1/1. The chain is Urease subunit beta from Dinoroseobacter shibae (strain DSM 16493 / NCIMB 14021 / DFL 12).